Here is a 352-residue protein sequence, read N- to C-terminus: Neuronal growth regulator 1 (352 aa).

Residues 1 to 35 (MVPLVRGAGGSHQWLAAVLLGLCCLLPAGRLAAPG) form the signal peptide. Ig-like C2-type domains follow at residues 36–132 (GDFP…VHLT), 137–219 (PKIF…KVTV), and 223–311 (PTIQ…LPLN). The cysteines at positions 58 and 116 are disulfide-linked. Residues asparagine 71 and asparagine 153 are each glycosylated (N-linked (GlcNAc...) asparagine). Cystine bridges form between cysteine 158/cysteine 201 and cysteine 243/cysteine 295. 4 N-linked (GlcNAc...) asparagine glycosylation sites follow: asparagine 273, asparagine 284, asparagine 292, and asparagine 305. Glycine 322 is lipidated: GPI-anchor amidated glycine. A propeptide spans 323 to 352 (DAEVLFSCWYLVLTLSSLTSIFYLKNIILH) (removed in mature form).

It belongs to the immunoglobulin superfamily. IgLON family. As to quaternary structure, interacts with CEPU-1 and LAMP. Post-translationally, glycosylated. Expressed in embryonic retina, telencephalon, tectum, cerebellum and diencephalon (at protein level).

It localises to the cell membrane. Its function is as follows. May be involved in cell-adhesion. May participate in the regulation of neurite outgrowth in the developing brain. This chain is Neuronal growth regulator 1 (NEGR1), found in Gallus gallus (Chicken).